Here is an 85-residue protein sequence, read N- to C-terminus: Exodeoxyribonuclease 7 small subunit (85 aa).

The protein belongs to the XseB family. Heterooligomer composed of large and small subunits.

It localises to the cytoplasm. It carries out the reaction Exonucleolytic cleavage in either 5'- to 3'- or 3'- to 5'-direction to yield nucleoside 5'-phosphates.. Functionally, bidirectionally degrades single-stranded DNA into large acid-insoluble oligonucleotides, which are then degraded further into small acid-soluble oligonucleotides. In Alkalilimnicola ehrlichii (strain ATCC BAA-1101 / DSM 17681 / MLHE-1), this protein is Exodeoxyribonuclease 7 small subunit.